Consider the following 324-residue polypeptide: Endochitinase 1 (324 aa).

A signal peptide spans 1 to 22; it reads MSFLQALSIFLLLLLYVVVGSA. The region spanning 23–64 is the Chitin-binding type-1 domain; it reads EQCGRQAGGALCPGGLCCSQFGWCGSTADYCTVPGCQSQCSG. Intrachain disulfides connect Cys-25–Cys-40, Cys-34–Cys-46, Cys-39–Cys-53, Cys-58–Cys-62, Cys-95–Cys-158, Cys-170–Cys-178, and Cys-277–Cys-309. Glu-139 (proton donor) is an active-site residue. Positions 318–324 are cleaved as a propeptide — removed in mature form; it reads GVSVDSM.

The protein belongs to the glycosyl hydrolase 19 family. Chitinase class I subfamily.

The enzyme catalyses Random endo-hydrolysis of N-acetyl-beta-D-glucosaminide (1-&gt;4)-beta-linkages in chitin and chitodextrins.. In terms of biological role, defense against chitin-containing fungal pathogens. This Gossypium hirsutum (Upland cotton) protein is Endochitinase 1.